The following is an 822-amino-acid chain: Valine--tRNA ligase (822 aa).

A 'HIGH' region motif is present at residues 41–51; the sequence is PNVTGQLHLGH. The short motif at 511-515 is the 'KMSKS' region element; the sequence is KMSKS. An ATP-binding site is contributed by lysine 514. Positions 765-822 form a coiled coil; it reads EQKGRELKEIQFLKSEILRAEKILTNKGFLEKAPREKIDLERTKLEKLKEKLVFYEKK.

Belongs to the class-I aminoacyl-tRNA synthetase family. ValS type 1 subfamily. In terms of assembly, monomer.

It localises to the cytoplasm. It carries out the reaction tRNA(Val) + L-valine + ATP = L-valyl-tRNA(Val) + AMP + diphosphate. Functionally, catalyzes the attachment of valine to tRNA(Val). As ValRS can inadvertently accommodate and process structurally similar amino acids such as threonine, to avoid such errors, it has a 'posttransfer' editing activity that hydrolyzes mischarged Thr-tRNA(Val) in a tRNA-dependent manner. This is Valine--tRNA ligase from Mesomycoplasma hyopneumoniae (strain J / ATCC 25934 / NCTC 10110) (Mycoplasma hyopneumoniae).